We begin with the raw amino-acid sequence, 143 residues long: Small ribosomal subunit protein eS12 (143 aa).

The protein belongs to the eukaryotic ribosomal protein eS12 family. Component of the small ribosomal subunit. Mature ribosomes consist of a small (40S) and a large (60S) subunit. The 40S subunit contains about 32 different proteins and 1 molecule of RNA (18S). The 60S subunit contains 45 different proteins and 3 molecules of RNA (25S, 5.8S and 5S).

It is found in the cytoplasm. In terms of biological role, component of the ribosome, a large ribonucleoprotein complex responsible for the synthesis of proteins in the cell. The small ribosomal subunit (SSU) binds messenger RNAs (mRNAs) and translates the encoded message by selecting cognate aminoacyl-transfer RNA (tRNA) molecules. The large subunit (LSU) contains the ribosomal catalytic site termed the peptidyl transferase center (PTC), which catalyzes the formation of peptide bonds, thereby polymerizing the amino acids delivered by tRNAs into a polypeptide chain. The nascent polypeptides leave the ribosome through a tunnel in the LSU and interact with protein factors that function in enzymatic processing, targeting, and the membrane insertion of nascent chains at the exit of the ribosomal tunnel. The chain is Small ribosomal subunit protein eS12 (RPS12) from Candida albicans (strain SC5314 / ATCC MYA-2876) (Yeast).